The primary structure comprises 479 residues: Aspartyl/glutamyl-tRNA(Asn/Gln) amidotransferase subunit B (479 aa).

It belongs to the GatB/GatE family. GatB subfamily. In terms of assembly, heterotrimer of A, B and C subunits.

It carries out the reaction L-glutamyl-tRNA(Gln) + L-glutamine + ATP + H2O = L-glutaminyl-tRNA(Gln) + L-glutamate + ADP + phosphate + H(+). It catalyses the reaction L-aspartyl-tRNA(Asn) + L-glutamine + ATP + H2O = L-asparaginyl-tRNA(Asn) + L-glutamate + ADP + phosphate + 2 H(+). In terms of biological role, allows the formation of correctly charged Asn-tRNA(Asn) or Gln-tRNA(Gln) through the transamidation of misacylated Asp-tRNA(Asn) or Glu-tRNA(Gln) in organisms which lack either or both of asparaginyl-tRNA or glutaminyl-tRNA synthetases. The reaction takes place in the presence of glutamine and ATP through an activated phospho-Asp-tRNA(Asn) or phospho-Glu-tRNA(Gln). In Geobacter sp. (strain M21), this protein is Aspartyl/glutamyl-tRNA(Asn/Gln) amidotransferase subunit B.